We begin with the raw amino-acid sequence, 214 residues long: Probable transaldolase (214 aa).

The active-site Schiff-base intermediate with substrate is the K83.

This sequence belongs to the transaldolase family. Type 3B subfamily.

The protein resides in the cytoplasm. The catalysed reaction is D-sedoheptulose 7-phosphate + D-glyceraldehyde 3-phosphate = D-erythrose 4-phosphate + beta-D-fructose 6-phosphate. Its pathway is carbohydrate degradation; pentose phosphate pathway; D-glyceraldehyde 3-phosphate and beta-D-fructose 6-phosphate from D-ribose 5-phosphate and D-xylulose 5-phosphate (non-oxidative stage): step 2/3. Its function is as follows. Transaldolase is important for the balance of metabolites in the pentose-phosphate pathway. The chain is Probable transaldolase from Geobacter metallireducens (strain ATCC 53774 / DSM 7210 / GS-15).